We begin with the raw amino-acid sequence, 353 residues long: Polyprenal reductase 2 (353 aa).

Transmembrane regions (helical) follow at residues 11–31 (PLLCFAWIAATLPIIAAALPI), 78–98 (FMHFYVVGVLATTILLLAIWF), 175–195 (MHIVGYLTGLFYYVAAPLSLA), 234–254 (PLLKLGWTQWIGAVIFIWGSL), 291–308 (YLAELVIYFGMLVASGAE), and 313–335 (WFLFIFLITNLSFAAVETYNWYL).

This sequence belongs to the steroid 5-alpha reductase family. Polyprenal reductase subfamily.

The protein localises to the cell membrane. The catalysed reaction is a di-trans,poly-cis-dolichal + NADP(+) = a di-trans,poly-cis-polyprenal + NADPH + H(+). It participates in protein modification; protein glycosylation. Its function is as follows. Plays a key role in early steps of protein N-linked glycosylation by being involved in the conversion of polyprenol into dolichol. Acts as a polyprenal reductase that mediates the reduction of polyprenal into dolichal in a NADP-dependent mechanism. Dolichols are required for the synthesis of dolichol-linked monosaccharides and the oligosaccharide precursor used for N-glycosylation. The polypeptide is Polyprenal reductase 2 (Oryza sativa subsp. indica (Rice)).